The chain runs to 106 residues: Large ribosomal subunit protein uL23 (106 aa).

This sequence belongs to the universal ribosomal protein uL23 family. In terms of assembly, part of the 50S ribosomal subunit. Contacts protein L29, and trigger factor when it is bound to the ribosome.

Functionally, one of the early assembly proteins it binds 23S rRNA. One of the proteins that surrounds the polypeptide exit tunnel on the outside of the ribosome. Forms the main docking site for trigger factor binding to the ribosome. The chain is Large ribosomal subunit protein uL23 from Neisseria gonorrhoeae (strain ATCC 700825 / FA 1090).